The primary structure comprises 423 residues: tRNA-dihydrouridine(16/17) synthase [NAD(P)(+)] (423 aa).

The residue at position 2 (T2) is an N-acetylthreonine. FMN is bound by residues 35-37 and Q92; that span reads PMV. C121 (proton donor) is an active-site residue. Residues K160, H188, 223–225, and 247–248 each bind FMN; these read NGN and AE. Residues 404–423 form a disordered region; it reads KKRKADVPLESADKKKDVKA. Basic and acidic residues predominate over residues 408–423; sequence ADVPLESADKKKDVKA.

It belongs to the Dus family. Dus1 subfamily. Monomer. The cofactor is FMN.

The enzyme catalyses 5,6-dihydrouridine(16) in tRNA + NADP(+) = uridine(16) in tRNA + NADPH + H(+). It carries out the reaction 5,6-dihydrouridine(16) in tRNA + NAD(+) = uridine(16) in tRNA + NADH + H(+). The catalysed reaction is 5,6-dihydrouridine(17) in tRNA + NAD(+) = uridine(17) in tRNA + NADH + H(+). It catalyses the reaction 5,6-dihydrouridine(17) in tRNA + NADP(+) = uridine(17) in tRNA + NADPH + H(+). The enzyme catalyses a 5,6-dihydrouridine in mRNA + NAD(+) = a uridine in mRNA + NADH + H(+). It carries out the reaction a 5,6-dihydrouridine in mRNA + NADP(+) = a uridine in mRNA + NADPH + H(+). Its function is as follows. Catalyzes the synthesis of dihydrouridine, a modified base found in the D-loop of most tRNAs. Specifically modifies U16 and U17 in cytoplasmic tRNAs. Also able to mediate dihydrouridylation of some mRNAs, thereby affecting their translation. The polypeptide is tRNA-dihydrouridine(16/17) synthase [NAD(P)(+)] (Saccharomyces cerevisiae (strain ATCC 204508 / S288c) (Baker's yeast)).